A 452-amino-acid chain; its full sequence is Proline--tRNA ligase (452 aa).

The protein belongs to the class-II aminoacyl-tRNA synthetase family. ProS type 2 subfamily. As to quaternary structure, homodimer.

It localises to the cytoplasm. It catalyses the reaction tRNA(Pro) + L-proline + ATP = L-prolyl-tRNA(Pro) + AMP + diphosphate. Its function is as follows. Catalyzes the attachment of proline to tRNA(Pro) in a two-step reaction: proline is first activated by ATP to form Pro-AMP and then transferred to the acceptor end of tRNA(Pro). The chain is Proline--tRNA ligase from Jannaschia sp. (strain CCS1).